The chain runs to 346 residues: uncharacterized protein (346 aa).

The protein belongs to the PhyH family.

The protein resides in the cytoplasm. This is an uncharacterized protein from Saccharomyces cerevisiae (strain ATCC 204508 / S288c) (Baker's yeast).